The primary structure comprises 183 residues: Ribosome rescue factor SmrB (183 aa).

The 76-residue stretch at 98-173 folds into the Smr domain; sequence LDLHGLTQLQ…GDAALLVLIE (76 aa).

Belongs to the SmrB family. In terms of assembly, associates with collided ribosomes, but not with correctly translating polysomes.

In terms of biological role, acts as a ribosome collision sensor. Detects stalled/collided disomes (pairs of ribosomes where the leading ribosome is stalled and a second ribosome has collided with it) and endonucleolytically cleaves mRNA at the 5' boundary of the stalled ribosome. Stalled/collided disomes form a new interface (primarily via the 30S subunits) that binds SmrB. Cleaved mRNA becomes available for tmRNA ligation, leading to ribosomal subunit dissociation and rescue of stalled ribosomes. The sequence is that of Ribosome rescue factor SmrB from Shigella boydii serotype 18 (strain CDC 3083-94 / BS512).